The following is a 722-amino-acid chain: ORC ubiquitin ligase 1 (722 aa).

An RING-type; degenerate zinc finger spans residues 18 to 56 (CHICLGKVRQPVVCTNNHVFCSICIDLWLKNNSQCPACR). Coiled-coil stretches lie at residues 87 to 129 (LRKT…TILD) and 157 to 267 (VVEW…KEDV). Phosphoserine is present on S210. The segment at 273–359 (RAPSADSKGP…RLGARETPMD (87 aa)) is disordered. The span at 302-319 (AGSASASHLASPSSSRLA) shows a compositional bias: low complexity. A compositionally biased stretch (polar residues) spans 323-338 (SVRQESTSRTEPNCPQ). Positions 339 to 359 (NKDRYPKPTEPRLGARETPMD) are enriched in basic and acidic residues. S522, S549, S557, S564, and S566 each carry phosphoserine. Residues 541 to 555 (MSESDNSKSPCNNGF) show a composition bias toward polar residues. Disordered stretches follow at residues 541–585 (MSES…GSKL) and 691–722 (VPEKRSKNGNQSTKRKIQSSLANASPSKATKS). The segment covering 571 to 581 (EFLEEPDKLQE) has biased composition (basic and acidic residues). Residues 698–722 (NGNQSTKRKIQSSLANASPSKATKS) are compositionally biased toward polar residues. S715 and S717 each carry phosphoserine.

As to quaternary structure, associates with ORC complex. Binds to chromatin; association is cell cycle-regulated, absent from mitotic chromosomes, is associated with chromatin from G1 and partially released from chromatin from mid S-phase. In terms of processing, auto-ubiquitinated.

Its subcellular location is the chromosome. It carries out the reaction S-ubiquitinyl-[E2 ubiquitin-conjugating enzyme]-L-cysteine + [acceptor protein]-L-lysine = [E2 ubiquitin-conjugating enzyme]-L-cysteine + N(6)-ubiquitinyl-[acceptor protein]-L-lysine.. In terms of biological role, E3 ubiquitin ligase essential for DNA replication origin activation during S phase. Acts as a replication origin selector which selects the origins to be fired and catalyzes the multi-mono-ubiquitination of a subset of chromatin-bound ORC3 and ORC5 during S-phase. The sequence is that of ORC ubiquitin ligase 1 from Mus musculus (Mouse).